Consider the following 326-residue polypeptide: Ribosome biogenesis protein BRX1 homolog (326 aa).

Residues 1–17 (MVKPSKILEKIKKRTEP) are compositionally biased toward basic and acidic residues. The interval 1-66 (MVKPSKILEK…EENKNIEENK (66 aa)) is disordered. A compositionally biased stretch (acidic residues) spans 22–57 (VVEEESDEEIIEQEGSEEEEEIVEEESEEEEEEVEE). A Brix domain is found at 75–268 (KRVLFTSTRG…IDKIFSDGFG (194 aa)).

It belongs to the BRX1 family.

Its subcellular location is the nucleus. The protein localises to the nucleolus. Required for biogenesis of the 60S ribosomal subunit. The sequence is that of Ribosome biogenesis protein BRX1 homolog (bxdc2) from Dictyostelium discoideum (Social amoeba).